Reading from the N-terminus, the 166-residue chain is Large ribosomal subunit protein uL10 (166 aa).

It belongs to the universal ribosomal protein uL10 family. As to quaternary structure, part of the ribosomal stalk of the 50S ribosomal subunit. The N-terminus interacts with L11 and the large rRNA to form the base of the stalk. The C-terminus forms an elongated spine to which L12 dimers bind in a sequential fashion forming a multimeric L10(L12)X complex.

Its function is as follows. Forms part of the ribosomal stalk, playing a central role in the interaction of the ribosome with GTP-bound translation factors. The chain is Large ribosomal subunit protein uL10 from Streptococcus equi subsp. zooepidemicus (strain MGCS10565).